The sequence spans 423 residues: AP-1 complex subunit mu-1 (423 aa).

N-acetylserine is present on serine 2. Phosphothreonine is present on residues threonine 152, threonine 154, and threonine 223. An MHD domain is found at lysine 168–arginine 421.

It belongs to the adaptor complexes medium subunit family. In terms of assembly, adaptor protein complex 1 (AP-1) is a heterotetramer composed of two large adaptins (gamma-type subunit AP1G1 and beta-type subunit AP1B1), a medium adaptin (mu-type subunit AP1M1 or AP1M2) and a small adaptin (sigma-type subunit AP1S1 or AP1S2 or AP1S3). Interacts with MARCHF11. Post-translationally, phosphorylation of membrane-bound AP1M1/AP1M2 increases its affinity for sorting signals.

It localises to the golgi apparatus. Its subcellular location is the cytoplasmic vesicle. It is found in the clathrin-coated vesicle membrane. Its function is as follows. Subunit of clathrin-associated adaptor protein complex 1 that plays a role in protein sorting in the trans-Golgi network (TGN) and endosomes. The AP complexes mediate the recruitment of clathrin to membranes and the recognition of sorting signals within the cytosolic tails of transmembrane cargo molecules. The polypeptide is AP-1 complex subunit mu-1 (Ap1m1) (Mus musculus (Mouse)).